Reading from the N-terminus, the 600-residue chain is NAD-dependent malic enzyme, mitochondrial (600 aa).

The N-terminal 68 residues, 1–68, are a transit peptide targeting the mitochondrion; the sequence is MTRTPFTLSL…NMPIAAPVRT (68 aa). R93 provides a ligand contact to fumarate. Y138 serves as the catalytic Proton donor. R194 is a binding site for (S)-malate. R194 provides a ligand contact to NAD(+). Catalysis depends on K212, which acts as the Proton acceptor. Residues E283, D284, and D307 each coordinate a divalent metal cation. NAD(+) contacts are provided by G344 and A347. 2 residues coordinate (S)-malate: N458 and N502.

It belongs to the malic enzymes family. Requires Mg(2+) as cofactor. Mn(2+) serves as cofactor.

It localises to the mitochondrion matrix. The protein resides in the cytoplasm. The protein localises to the cytosol. It is found in the nucleus. It carries out the reaction (S)-malate + NAD(+) = pyruvate + CO2 + NADH. The enzyme catalyses oxaloacetate + H(+) = pyruvate + CO2. Functionally, NAD-dependent mitochondrial malic enzyme that catalyzes the oxidative decarboxylation of malate to pyruvate. The protein is NAD-dependent malic enzyme, mitochondrial of Cryptococcus neoformans var. grubii serotype A (strain H99 / ATCC 208821 / CBS 10515 / FGSC 9487) (Filobasidiella neoformans var. grubii).